Here is a 581-residue protein sequence, read N- to C-terminus: Serine/threonine protein phosphatase 2A 55 kDa regulatory subunit B alpha isoform (581 aa).

Residues 1–27 are disordered; that stretch reads MMNPDGGDGDRLEAAGAGSSSAQQGHP. The segment covering 14 to 25 has biased composition (low complexity); sequence AAGAGSSSAQQG. WD repeat units follow at residues 47-86 and 123-164; these read QEVD…DNAS and EIEE…VKQV. Residues 172–189 are compositionally biased toward low complexity; sequence RSVGTGTSSSASTSSSRG. A disordered region spans residues 172–192; that stretch reads RSVGTGTSSSASTSSSRGLLP. WD repeat units lie at residues 241-279, 290-330, 349-387, and 492-530; these read AHDY…QSFN, DLTE…LCDN, EIIA…GPVS, and DFST…RKFI.

It belongs to the phosphatase 2A regulatory subunit B family. In terms of assembly, PP2A consists of a common heteromeric enzyme, composed of a catalytic subunit (subunits C), a constant regulatory subunit (subunit A), and a variety of regulatory subunits such as subunits B (the R2/B/PR55/B55, R3/B''/PR72/PR130/PR59 and R5/B'/B56 families).

In terms of biological role, the B regulatory subunit may modulate substrate selectivity and catalytic activity, and may also direct the localization of the catalytic enzyme to a particular subcellular compartment. The protein is Serine/threonine protein phosphatase 2A 55 kDa regulatory subunit B alpha isoform of Oryza sativa subsp. japonica (Rice).